Reading from the N-terminus, the 744-residue chain is Polyadenylate-binding protein, cytoplasmic and nuclear (744 aa).

Residues 1–11 show a composition bias toward polar residues; it reads MSEVANSTSPV. Residues 1 to 42 are disordered; the sequence is MSEVANSTSPVQDGADANGAQINTNVPAASGDAPTPTTAAQQ. Positions 33–42 are enriched in low complexity; that stretch reads APTPTTAAQQ. RRM domains lie at 48–126, 136–213, 229–306, and 332–462; these read ASLY…WSQR, GNVF…HHIP, TNIY…RAQK, and VNLY…LAQR. 4 disordered regions span residues 368–411, 527–550, 607–651, and 723–744; these read EEKK…AGDK, GRGAGFPGGMPGQQGGRGGPNAQQ, IAGG…PGVD, and VKNKEGDGEKEAPKEESKEEKA. A compositionally biased stretch (basic and acidic residues) spans 376–397; the sequence is KEVKEEKKEDEKKEDEEAKEGS. Composition is skewed to gly residues over residues 527 to 545, 609 to 632, and 640 to 649; these read GRGAGFPGGMPGQQGGRGG, GGPGIRGGQGGFPQGGRGAPGGRG, and PQGGRPGGPG. Positions 647-724 constitute a PABC domain; sequence GPGVDMSVLS…AMSVYDEYVK (78 aa).

It belongs to the polyadenylate-binding protein type-1 family.

Its subcellular location is the cytoplasm. It localises to the nucleus. Functionally, binds the poly(A) tail of mRNA. Appears to be an important mediator of the multiple roles of the poly(A) tail in mRNA biogenesis, stability and translation. In the nucleus, involved in both mRNA cleavage and polyadenylation. Is also required for efficient mRNA export to the cytoplasm. Acts in concert with a poly(A)-specific nuclease (PAN) to affect poly(A) tail shortening, which may occur concomitantly with either nucleocytoplasmic mRNA transport or translational initiation. In the cytoplasm, stimulates translation initiation and regulates mRNA decay through translation termination-coupled poly(A) shortening, probably mediated by PAN. The polypeptide is Polyadenylate-binding protein, cytoplasmic and nuclear (PAB1) (Phaeosphaeria nodorum (strain SN15 / ATCC MYA-4574 / FGSC 10173) (Glume blotch fungus)).